Consider the following 742-residue polypeptide: Zinc transporter ZIP6 (742 aa).

Residues 1–353 are Extracellular-facing; the sequence is MMTFLCTRSG…QRNTPVYIAW (353 aa). Residues Asn94 and Asn127 are each glycosylated (N-linked (GlcNAc...) asparagine). Disordered regions lie at residues 148 to 182 and 191 to 210; these read PVTT…SQSD and MNQE…RSRR. Basic and acidic residues predominate over residues 152-165; that stretch reads KKGDMDHSVEKSDP. Over residues 192-206 the composition is skewed to polar residues; the sequence is NQESTTALTTPSYVT. N-linked (GlcNAc...) asparagine glycosylation is found at Asn212, Asn232, and Asn237. The disordered stretch occupies residues 220–260; the sequence is TQDHASFSPSQPNVTHSNHTHHDEDTPTHQHDDHDEHEHAR. A compositionally biased stretch (polar residues) spans 222–236; that stretch reads DHASFSPSQPNVTHS. A compositionally biased stretch (basic and acidic residues) spans 239–260; it reads THHDEDTPTHQHDDHDEHEHAR. Asn267 and Asn337 each carry an N-linked (GlcNAc...) asparagine glycan. Positions 310-342 are disordered; it reads EDEHSDHSHHHKHHHHHHDHQHLQHPHNHTNGR. The segment covering 316–339 has biased composition (basic residues); the sequence is HSHHHKHHHHHHDHQHLQHPHNHT. Residues 354–374 traverse the membrane as a helical segment; sequence LGGFLSITLISLLALVGVVLI. The Cytoplasmic portion of the chain corresponds to 375-385; the sequence is PLMNRVCFNFL. A helical membrane pass occupies residues 386-406; sequence LSFLVALAVGTLSGDALLHLI. The Extracellular segment spans residues 407–430; it reads PHSQGHHHHGHSEEHAEEEDSLRP. A helical membrane pass occupies residues 431–451; sequence VWTGLTALSGVYIMFLIEHFL. At 452–644 the chain is on the cytoplasmic side; that stretch reads TLGKMYKDKN…LKAGMSVRQA (193 aa). A helical transmembrane segment spans residues 645–665; sequence MLYNLLSALMGYLGMIIGILI. The Extracellular segment spans residues 666–671; sequence GHYAEN. The helical transmembrane segment at 672 to 692 threads the bilayer; that stretch reads VATWIFALTAGLFMYVALVDM. Over 693–710 the chain is Cytoplasmic; it reads VPEMLHNDASEAGFSHYG. The chain crosses the membrane as a helical span at residues 711 to 731; sequence FFLLQNAGILLGFGIMLIIAV. The Extracellular portion of the chain corresponds to 732 to 742; that stretch reads FEDRIQLDLGY.

This sequence belongs to the ZIP transporter (TC 2.A.5) family. Cleaved on the N-terminus before locating to the plasma membrane. Post-translationally, N-glycosylated.

Its subcellular location is the cell membrane. The catalysed reaction is Zn(2+)(in) = Zn(2+)(out). Acts as a zinc-influx transporter which plays a role in zinc homeostasis and in the induction of epithelial-to-mesenchymal transition (EMT). The protein is Zinc transporter ZIP6 of Danio rerio (Zebrafish).